Reading from the N-terminus, the 363-residue chain is Phosphoserine aminotransferase (363 aa).

R42 provides a ligand contact to L-glutamate. Residues 76–77 (GR), W102, T156, D175, and Q198 contribute to the pyridoxal 5'-phosphate site. K199 bears the N6-(pyridoxal phosphate)lysine mark. 240 to 241 (NT) is a binding site for pyridoxal 5'-phosphate.

This sequence belongs to the class-V pyridoxal-phosphate-dependent aminotransferase family. SerC subfamily. Homodimer. It depends on pyridoxal 5'-phosphate as a cofactor.

The protein resides in the cytoplasm. It catalyses the reaction O-phospho-L-serine + 2-oxoglutarate = 3-phosphooxypyruvate + L-glutamate. The catalysed reaction is 4-(phosphooxy)-L-threonine + 2-oxoglutarate = (R)-3-hydroxy-2-oxo-4-phosphooxybutanoate + L-glutamate. Its pathway is amino-acid biosynthesis; L-serine biosynthesis; L-serine from 3-phospho-D-glycerate: step 2/3. The protein operates within cofactor biosynthesis; pyridoxine 5'-phosphate biosynthesis; pyridoxine 5'-phosphate from D-erythrose 4-phosphate: step 3/5. Catalyzes the reversible conversion of 3-phosphohydroxypyruvate to phosphoserine and of 3-hydroxy-2-oxo-4-phosphonooxybutanoate to phosphohydroxythreonine. The polypeptide is Phosphoserine aminotransferase (Shewanella baltica (strain OS155 / ATCC BAA-1091)).